The chain runs to 244 residues: Glutathione S-transferase theta-2B (244 aa).

One can recognise a GST N-terminal domain in the interval 2–82; sequence GLELFLDLVS…YLSCKYQTPD (81 aa). Glutathione contacts are provided by residues 40–41, 53–54, 66–67, and 104–107; these read HK, KL, ES, and DCIR. The 137-residue stretch at 88–224 folds into the GST C-terminal domain; it reads DLQARARVHE…SILEQAAKKT (137 aa).

This sequence belongs to the GST superfamily. Theta family. In terms of assembly, homodimer. As to expression, expressed at low levels in liver. In lung, expressed at low levels in ciliated bronchiolar cells, alveolar macrophages and alveolar type II cells.

The protein resides in the cytoplasm. It is found in the cytosol. The enzyme catalyses RX + glutathione = an S-substituted glutathione + a halide anion + H(+). Conjugation of reduced glutathione to a wide number of exogenous and endogenous hydrophobic electrophiles. Has a sulfatase activity. The chain is Glutathione S-transferase theta-2B (GSTT2B) from Homo sapiens (Human).